A 701-amino-acid chain; its full sequence is Capsid protein VP1 (701 aa).

Belongs to the caliciviridae capsid protein family. As to quaternary structure, homodimer. Homomultimer. Interacts with the minor capsid protein VP2. May bind to VP3 and Vpg proteins. In terms of processing, cleaved by the viral protease to produce mature capsid protein.

Its subcellular location is the virion. It is found in the host cytoplasm. Its function is as follows. Capsid protein self assembles to form an icosahedral capsid with a T=3 symmetry, about 38 nm in diameter, and consisting of 180 capsid proteins. A smaller form of capsid with a diameter of 23 nm might be capsid proteins assembled as icosahedron with T=1 symmetry. The capsid encapsulates the genomic RNA and is decorated with VP2 proteins. In Vesicular exanthema of swine virus serotype A48 (isolate Swine/United States/A48/1948) (VESV), this protein is Capsid protein VP1.